Consider the following 152-residue polypeptide: Nucleoplasmin-like protein (152 aa).

Over residues 109–128 (EVVDMEEDDEEDDVAEDEED) the composition is skewed to acidic residues. The disordered stretch occupies residues 109–152 (EVVDMEEDDEEDDVAEDEEDEHPKKRAKIENAADGKNAKNNKKK). A compositionally biased stretch (basic and acidic residues) spans 136-145 (KIENAADGKN).

It belongs to the nucleoplasmin family. In terms of assembly, decamer formed by two pentameric rings associated in a head-to-head fashion.

Its subcellular location is the nucleus. In terms of biological role, binds to core histones and functions in the ATP-facilitated assembly of approximately regularly spaced nucleosomal arrays. May participate in parallel with other histone-binding proteins such as NAP-1. Inactive for chromatin assembly. In vitro it appears to form a high molecular mass aggregate with the core histones. In Drosophila melanogaster (Fruit fly), this protein is Nucleoplasmin-like protein (Nlp).